A 428-amino-acid polypeptide reads, in one-letter code: Involucrin (428 aa).

2 disordered regions span residues 1 to 128 and 140 to 398; these read MSQQ…EEKK and KRDD…GQAQ. Over residues 56–76 the composition is skewed to basic and acidic residues; it reads PSKHEEKHVTIVKGVPEHECE. The span at 77–92 shows a compositional bias: low complexity; that stretch reads QQQQAQGQERQQQHWG. Composition is skewed to basic and acidic residues over residues 107–117, 162–174, and 192–208; these read LKQEEAQREKQ, QLKH…KPLE, and QLKH…HLEQ. A compositionally biased stretch (low complexity) spans 209 to 218; that stretch reads QEGQLELPEQ. The span at 220–297 shows a compositional bias: basic and acidic residues; the sequence is DQPKHLEQLE…CEGQLEHLEQ (78 aa). Residues 298-311 show a composition bias toward low complexity; it reads QEGQLELPEQQVGQ. 3 stretches are compositionally biased toward basic and acidic residues: residues 313–327, 352–366, and 374–385; these read KHLE…HPEQ and QLKDLEQQERQL.

The protein belongs to the involucrin family. Directly or indirectly cross-linked to cornifelin (CNFN). In terms of processing, substrate of transglutaminase. Specific glutamines or lysines are cross-linked to keratins, desmoplakin and to inter involucrin molecules. Keratinocytes of epidermis and other stratified squamous epithelia.

The protein resides in the cytoplasm. Part of the insoluble cornified cell envelope (CE) of stratified squamous epithelia. The polypeptide is Involucrin (IVL) (Cebus albifrons (White-fronted capuchin)).